Consider the following 337-residue polypeptide: 1-aminocyclopropane-1-carboxylate deaminase (337 aa).

Residue K50 is modified to N6-(pyridoxal phosphate)lysine. Catalysis depends on S77, which acts as the Nucleophile.

The protein belongs to the ACC deaminase/D-cysteine desulfhydrase family. As to quaternary structure, homotrimer. Pyridoxal 5'-phosphate serves as cofactor.

It catalyses the reaction 1-aminocyclopropane-1-carboxylate + H2O = 2-oxobutanoate + NH4(+). Catalyzes a cyclopropane ring-opening reaction, the irreversible conversion of 1-aminocyclopropane-1-carboxylate (ACC) to ammonia and alpha-ketobutyrate. Allows growth on ACC as a nitrogen source. This is 1-aminocyclopropane-1-carboxylate deaminase from Methylobacterium nodulans (strain LMG 21967 / CNCM I-2342 / ORS 2060).